The following is a 50-amino-acid chain: Large ribosomal subunit protein bL33B (50 aa).

It belongs to the bacterial ribosomal protein bL33 family.

This is Large ribosomal subunit protein bL33B from Streptococcus pneumoniae (strain ATCC BAA-255 / R6).